A 250-amino-acid polypeptide reads, in one-letter code: 5-oxoprolinase subunit A (250 aa).

It belongs to the LamB/PxpA family. As to quaternary structure, forms a complex composed of PxpA, PxpB and PxpC.

It carries out the reaction 5-oxo-L-proline + ATP + 2 H2O = L-glutamate + ADP + phosphate + H(+). Functionally, catalyzes the cleavage of 5-oxoproline to form L-glutamate coupled to the hydrolysis of ATP to ADP and inorganic phosphate. The chain is 5-oxoprolinase subunit A from Streptomyces griseus subsp. griseus (strain JCM 4626 / CBS 651.72 / NBRC 13350 / KCC S-0626 / ISP 5235).